Here is a 203-residue protein sequence, read N- to C-terminus: Outer-membrane lipoprotein carrier protein (203 aa).

The signal sequence occupies residues 1–21; that stretch reads MKKWLAISCLIAGVTSTAVYA.

This sequence belongs to the LolA family. Monomer.

Its subcellular location is the periplasm. Its function is as follows. Participates in the translocation of lipoproteins from the inner membrane to the outer membrane. Only forms a complex with a lipoprotein if the residue after the N-terminal Cys is not an aspartate (The Asp acts as a targeting signal to indicate that the lipoprotein should stay in the inner membrane). The sequence is that of Outer-membrane lipoprotein carrier protein from Pectobacterium atrosepticum (strain SCRI 1043 / ATCC BAA-672) (Erwinia carotovora subsp. atroseptica).